The primary structure comprises 442 residues: Probable xylan O-acetyltransferase 8 (442 aa).

Over 1–13 (MVQLPAMKRVKGR) the chain is Cytoplasmic. A helical; Signal-anchor for type II membrane protein transmembrane segment spans residues 14–34 (APLSVVVAIIGGLALAGIIFT). Topologically, residues 35–442 (EDLRGLTEVK…TWNRLLYAHL (408 aa)) are lumenal. Asparagine 96 is a glycosylation site (N-linked (GlcNAc...) asparagine). 4 cysteine pairs are disulfide-bonded: cysteine 100–cysteine 151, cysteine 122–cysteine 187, cysteine 131–cysteine 426, and cysteine 344–cysteine 422. Positions 174–176 (GDS) match the GDS motif motif. The active-site Nucleophile is serine 176. N-linked (GlcNAc...) asparagine glycosylation is found at asparagine 217, asparagine 346, and asparagine 384. The active-site Proton donor is aspartate 421. The DXXH motif motif lies at 421–424 (DCIH). Catalysis depends on histidine 424, which acts as the Proton acceptor.

This sequence belongs to the PC-esterase family. TBL subfamily.

The protein resides in the golgi apparatus membrane. Probable xylan acetyltransferase required for 2-O- and 3-O-monoacetylation of xylosyl residues in xylan. Possesses extremely low activity in vitro. The chain is Probable xylan O-acetyltransferase 8 from Oryza sativa subsp. japonica (Rice).